Here is a 239-residue protein sequence, read N- to C-terminus: Ribosomal RNA small subunit methyltransferase G (239 aa).

S-adenosyl-L-methionine contacts are provided by residues Gly-78, Phe-83, 129–130 (AE), and Arg-148.

Belongs to the methyltransferase superfamily. RNA methyltransferase RsmG family.

It is found in the cytoplasm. Its function is as follows. Specifically methylates the N7 position of a guanine in 16S rRNA. The sequence is that of Ribosomal RNA small subunit methyltransferase G from Clostridium botulinum (strain ATCC 19397 / Type A).